Reading from the N-terminus, the 1119-residue chain is SH3 and PX domain-containing protein 2A (1119 aa).

In terms of domain architecture, PX spans 4–128; the sequence is RTVLDVKVVD…RFFETKPDDI (125 aa). SH3 domains are found at residues 149 to 208 and 249 to 308; these read MVLE…SQSG and SREE…KLKD. Disordered stretches follow at residues 388–429, 494–595, 641–815, 914–941, and 957–1004; these read SSAT…PPRR, APSS…SNPA, SSDD…HESV, NLRS…AMLN, and RPQS…SSFT. The SH3 3 domain maps to 445–504; that stretch reads TVEAEYYTIAEFQSSISDGISFRGGQKADVIEKNSGGWWYVQIGDTEGWAPSSYIDKRKK. 2 stretches are compositionally biased toward basic and acidic residues: residues 581-590 and 688-718; these read PKPEPRKFEI and GRAE…DVEI. Low complexity predominate over residues 779 to 802; the sequence is TASVVSSEDSTSSRSTSDLSSVYS. Residues 806 to 815 show a composition bias toward basic and acidic residues; the sequence is RGGESDHESV. The SH3 4 domain maps to 812–871; that stretch reads HESVLFRTTDAYERAQESELSFPAGVEVEVLEKQESGWWFVRWGSDEGWVPTFYLEPIKH. Residues 1058–1119 enclose the SH3 5 domain; that stretch reads NLREVYVSIA…VPSNYLERKK (62 aa).

Belongs to the SH3PXD2 family. In terms of processing, tyrosine phosphorylated.

The protein resides in the cytoplasm. It localises to the cell projection. The protein localises to the podosome. Adapter protein involved in invadopodia and podosome formation and extracellular matrix degradation. This Danio rerio (Zebrafish) protein is SH3 and PX domain-containing protein 2A (sh3pxd2a).